The primary structure comprises 350 residues: Protein RecA (350 aa).

67 to 74 contributes to the ATP binding site; that stretch reads GPESSGKT.

This sequence belongs to the RecA family.

It is found in the cytoplasm. In terms of biological role, can catalyze the hydrolysis of ATP in the presence of single-stranded DNA, the ATP-dependent uptake of single-stranded DNA by duplex DNA, and the ATP-dependent hybridization of homologous single-stranded DNAs. It interacts with LexA causing its activation and leading to its autocatalytic cleavage. The polypeptide is Protein RecA (Wolinella succinogenes (strain ATCC 29543 / DSM 1740 / CCUG 13145 / JCM 31913 / LMG 7466 / NCTC 11488 / FDC 602W) (Vibrio succinogenes)).